Consider the following 146-residue polypeptide: Hemoglobin subunit beta (146 aa).

N-acetylvaline is present on Val-1. The Globin domain maps to 2–146; sequence HLTPEEKNAV…VANALAHKYH (145 aa). Thr-12 is modified (phosphothreonine). Ser-44 is subject to Phosphoserine. Lys-59 is subject to N6-acetyllysine. His-63 contributes to the heme b binding site. At Lys-82 the chain carries N6-acetyllysine. His-92 contributes to the heme b binding site. S-nitrosocysteine is present on Cys-93. At Lys-144 the chain carries N6-acetyllysine.

It belongs to the globin family. Heterotetramer of two alpha chains and two beta chains. As to expression, red blood cells.

Its function is as follows. Involved in oxygen transport from the lung to the various peripheral tissues. The sequence is that of Hemoglobin subunit beta (HBB) from Papio cynocephalus (Yellow baboon).